Here is a 230-residue protein sequence, read N- to C-terminus: uncharacterized protein (230 aa).

In terms of domain architecture, ABC transporter spans 2-230 (IQLSNVRKSY…ASSGQRSVGE (229 aa)). Position 38-45 (38-45 (GPSGSGKS)) interacts with ATP.

The protein belongs to the ABC transporter superfamily. In terms of assembly, part of a complex composed of YknX, YknY and YknZ. The complex interacts with YknW.

Its subcellular location is the cell membrane. Its function is as follows. Part of an unusual four-component transporter, which is required for protection against the killing factor SdpC (sporulation-delaying protein). This is an uncharacterized protein from Bacillus subtilis (strain 168).